We begin with the raw amino-acid sequence, 426 residues long: Antigen EM13 (426 aa).

In terms of domain architecture, F-BAR spans M1 to D240. 2 disordered regions span residues L287–S315 and I350–D369. The span at T305–S315 shows a compositional bias: polar residues. In terms of domain architecture, SH3 spans R371–R426.

The protein is Antigen EM13 (EM13) of Echinococcus multilocularis (Fox tapeworm).